Consider the following 944-residue polypeptide: Serine/threonine-protein kinase ATG1 (944 aa).

A Protein kinase domain is found at 24–327 (FNIGSEIGKG…FENFFTHQVV (304 aa)). Residues 30–38 (IGKGSFAQV) and Lys53 each bind ATP. The active-site Proton acceptor is Asp167. The segment at 344–423 (RQESRDPRSA…NSPREGGEGL (80 aa)) is disordered. Positions 356-367 (SGSPSLSSRSPR) are enriched in low complexity. The LIR motif lies at 428 to 431 (PVAQ). Disordered regions lie at residues 443–475 (YDSV…PITE), 512–572 (LGDA…GSAS), 777–801 (QLPD…AGSP), 860–895 (EGSG…EEAH), and 925–944 (AVRR…HASS). Composition is skewed to polar residues over residues 447–459 (TGRN…TSLL) and 516–549 (SQRS…NALA). Over residues 563-572 (SLSASPGSAS) the composition is skewed to low complexity. The segment covering 785-801 (HPSNHGTESIASSAGSP) has biased composition (polar residues). Residues 865–881 (ETRRLSTGKEAEREAVK) show a composition bias toward basic and acidic residues. The tract at residues 924–930 (QAVRRRS) is required for Cvt trafficking.

This sequence belongs to the protein kinase superfamily. Ser/Thr protein kinase family. APG1/unc-51/ULK1 subfamily. Homodimer. Dimerization requires the presence of ATG13. Forms a ternary complex with ATG13 and ATG17.

It is found in the cytoplasm. The protein localises to the preautophagosomal structure membrane. The catalysed reaction is L-seryl-[protein] + ATP = O-phospho-L-seryl-[protein] + ADP + H(+). The enzyme catalyses L-threonyl-[protein] + ATP = O-phospho-L-threonyl-[protein] + ADP + H(+). Its function is as follows. Serine/threonine protein kinase involved in the cytoplasm to vacuole transport (Cvt) and found to be essential in autophagy, where it is required for the formation of autophagosomes. Involved in the clearance of protein aggregates which cannot be efficiently cleared by the proteasome. Required for selective autophagic degradation of the nucleus (nucleophagy) as well as for mitophagy which contributes to regulate mitochondrial quantity and quality by eliminating the mitochondria to a basal level to fulfill cellular energy requirements and preventing excess ROS production. Also involved in endoplasmic reticulum-specific autophagic process, in selective removal of ER-associated degradation (ERAD) substrates. Plays a key role in ATG9 and ATG23 cycling through the pre-autophagosomal structure and is necessary to promote ATG18 binding to ATG9 through phosphorylation of ATG9. Catalyzes phosphorylation of ATG4, decreasing the interaction between ATG4 and ATG8 and impairing deconjugation of PE-conjugated forms of ATG8. Autophagy is required for proper vegetative growth, asexual/sexual reproduction, and full virulence. Autophagy is particularly involved in the biosynthesis of deoxynivalenol (DON), an important virulence determinant. This is Serine/threonine-protein kinase ATG1 from Gibberella zeae (strain ATCC MYA-4620 / CBS 123657 / FGSC 9075 / NRRL 31084 / PH-1) (Wheat head blight fungus).